The following is a 150-amino-acid chain: SsrA-binding protein (150 aa).

Residues 129–150 (KRQTLKSKEADREMARALRDRH) are disordered.

The protein belongs to the SmpB family.

It is found in the cytoplasm. Required for rescue of stalled ribosomes mediated by trans-translation. Binds to transfer-messenger RNA (tmRNA), required for stable association of tmRNA with ribosomes. tmRNA and SmpB together mimic tRNA shape, replacing the anticodon stem-loop with SmpB. tmRNA is encoded by the ssrA gene; the 2 termini fold to resemble tRNA(Ala) and it encodes a 'tag peptide', a short internal open reading frame. During trans-translation Ala-aminoacylated tmRNA acts like a tRNA, entering the A-site of stalled ribosomes, displacing the stalled mRNA. The ribosome then switches to translate the ORF on the tmRNA; the nascent peptide is terminated with the 'tag peptide' encoded by the tmRNA and targeted for degradation. The ribosome is freed to recommence translation, which seems to be the essential function of trans-translation. The polypeptide is SsrA-binding protein (Syntrophotalea carbinolica (strain DSM 2380 / NBRC 103641 / GraBd1) (Pelobacter carbinolicus)).